A 260-amino-acid polypeptide reads, in one-letter code: Phosphate import ATP-binding protein PstB 5 (260 aa).

The region spanning 9-255 is the ABC transporter domain; that stretch reads IKVKDLSFYY…PLDSRTRDYV (247 aa). 41–48 is a binding site for ATP; that stretch reads GPSGCGKS.

Belongs to the ABC transporter superfamily. Phosphate importer (TC 3.A.1.7) family. The complex is composed of two ATP-binding proteins (PstB), two transmembrane proteins (PstC and PstA) and a solute-binding protein (PstS).

Its subcellular location is the cell inner membrane. The catalysed reaction is phosphate(out) + ATP + H2O = ADP + 2 phosphate(in) + H(+). Part of the ABC transporter complex PstSACB involved in phosphate import. Responsible for energy coupling to the transport system. This chain is Phosphate import ATP-binding protein PstB 5, found in Trichormus variabilis (strain ATCC 29413 / PCC 7937) (Anabaena variabilis).